The primary structure comprises 100 residues: Small ribosomal subunit protein bS20 (100 aa).

The disordered stretch occupies residues 79–100 (AAHQKSRLSAAVKQAIEPAPST).

This sequence belongs to the bacterial ribosomal protein bS20 family.

Functionally, binds directly to 16S ribosomal RNA. This is Small ribosomal subunit protein bS20 from Prochlorococcus marinus (strain MIT 9303).